Here is a 121-residue protein sequence, read N- to C-terminus: Small ribosomal subunit protein uS13 (121 aa).

The segment at valine 97–lysine 121 is disordered. Basic residues predominate over residues glutamine 100–lysine 121.

This sequence belongs to the universal ribosomal protein uS13 family. In terms of assembly, part of the 30S ribosomal subunit. Forms a loose heterodimer with protein S19. Forms two bridges to the 50S subunit in the 70S ribosome.

In terms of biological role, located at the top of the head of the 30S subunit, it contacts several helices of the 16S rRNA. In the 70S ribosome it contacts the 23S rRNA (bridge B1a) and protein L5 of the 50S subunit (bridge B1b), connecting the 2 subunits; these bridges are implicated in subunit movement. Contacts the tRNAs in the A and P-sites. This Prochlorococcus marinus (strain MIT 9313) protein is Small ribosomal subunit protein uS13.